The chain runs to 90 residues: Sec-independent protein translocase protein TatA (90 aa).

Residues 1–21 form a helical membrane-spanning segment; sequence MGGASIWHWIVVGVIVMLLFG. Residues 42–90 are disordered; it reads GMADEDQPQAPVANQSPPPVSATEPVRTLPPHQGEPAPAANASVDRKVG.

This sequence belongs to the TatA/E family. In terms of assembly, the Tat system comprises two distinct complexes: a TatABC complex, containing multiple copies of TatA, TatB and TatC subunits, and a separate TatA complex, containing only TatA subunits. Substrates initially bind to the TatABC complex, which probably triggers association of the separate TatA complex to form the active translocon.

It is found in the cell inner membrane. Its function is as follows. Part of the twin-arginine translocation (Tat) system that transports large folded proteins containing a characteristic twin-arginine motif in their signal peptide across membranes. TatA could form the protein-conducting channel of the Tat system. This Methylobacterium nodulans (strain LMG 21967 / CNCM I-2342 / ORS 2060) protein is Sec-independent protein translocase protein TatA.